The primary structure comprises 475 residues: tRNA-2-methylthio-N(6)-dimethylallyladenosine synthase (475 aa).

Over residues 1-10 the composition is skewed to basic and acidic residues; that stretch reads MQETTVKRDG. A disordered region spans residues 1 to 22; it reads MQETTVKRDGASPSDAGTPATT. The region spanning 27–144 is the MTTase N-terminal domain; that stretch reads GKLYIRTFGC…LPDLIKRRRA (118 aa). Positions 36, 73, 107, 181, 185, and 188 each coordinate [4Fe-4S] cluster. The 234-residue stretch at 167-400 folds into the Radical SAM core domain; sequence RVDGATAFVS…QALINQQAAA (234 aa). Residues 403–466 enclose the TRAM domain; sequence QGMIGTRQRV…TNSLRGRVAG (64 aa).

Belongs to the methylthiotransferase family. MiaB subfamily. As to quaternary structure, monomer. [4Fe-4S] cluster is required as a cofactor.

The protein localises to the cytoplasm. The enzyme catalyses N(6)-dimethylallyladenosine(37) in tRNA + (sulfur carrier)-SH + AH2 + 2 S-adenosyl-L-methionine = 2-methylsulfanyl-N(6)-dimethylallyladenosine(37) in tRNA + (sulfur carrier)-H + 5'-deoxyadenosine + L-methionine + A + S-adenosyl-L-homocysteine + 2 H(+). Catalyzes the methylthiolation of N6-(dimethylallyl)adenosine (i(6)A), leading to the formation of 2-methylthio-N6-(dimethylallyl)adenosine (ms(2)i(6)A) at position 37 in tRNAs that read codons beginning with uridine. This Bordetella parapertussis (strain 12822 / ATCC BAA-587 / NCTC 13253) protein is tRNA-2-methylthio-N(6)-dimethylallyladenosine synthase.